We begin with the raw amino-acid sequence, 549 residues long: Glucose-6-phosphate isomerase (549 aa).

Glu355 acts as the Proton donor in catalysis. Catalysis depends on residues His387 and Lys515.

The protein belongs to the GPI family.

It is found in the cytoplasm. The catalysed reaction is alpha-D-glucose 6-phosphate = beta-D-fructose 6-phosphate. The protein operates within carbohydrate biosynthesis; gluconeogenesis. It participates in carbohydrate degradation; glycolysis; D-glyceraldehyde 3-phosphate and glycerone phosphate from D-glucose: step 2/4. Functionally, catalyzes the reversible isomerization of glucose-6-phosphate to fructose-6-phosphate. This is Glucose-6-phosphate isomerase from Histophilus somni (strain 129Pt) (Haemophilus somnus).